We begin with the raw amino-acid sequence, 1088 residues long: Insulin receptor substrate 1-B (1088 aa).

The PH domain occupies 15–117 (DVRKVGYLRK…WYQALVDLHN (103 aa)). Tyr48 carries the phosphotyrosine modification. An IRS-type PTB domain is found at 155-259 (FKEVWQVIMK…EAMKALSDEF (105 aa)). Positions 259–428 (FRPRSKSQSS…GGFISSDEYG (170 aa)) are disordered. 4 stretches are compositionally biased toward low complexity: residues 264–278 (KSQS…ISVP), 302–312 (SATATSPAGGA), 379–400 (SPSA…GSTS), and 408–420 (SSAS…SDGG). Residue Ser307 is modified to Phosphoserine. Tyr460 is modified (phosphotyrosine; by INSR). The YXXM motif 1 motif lies at 460-463 (YICM). 2 stretches are compositionally biased toward polar residues: residues 466-479 (SSSH…QRYQ) and 499-516 (SSGT…PSQS). 2 disordered regions span residues 466 to 485 (SSSH…RGEE) and 496 to 516 (RTHS…PSQS). 5 short sequence motifs (YXXM motif) span residues 521–524 (YTEM), 567–570 (YMPM), 584–587 (YMPM), 612–615 (YMMM), and 654–657 (YINM). Residues Tyr567 and Tyr584 each carry the phosphotyrosine; by INSR modification. Position 612 is a phosphotyrosine (Tyr612). A disordered region spans residues 704 to 785 (NLRISANSGH…PPEPKSPGEY (82 aa)). Polar residues predominate over residues 707–718 (ISANSGHNLYTE). Over residues 719–729 (DSSSSSTSSDS) the composition is skewed to low complexity. 2 positions are modified to phosphotyrosine; by INSR: Tyr785 and Tyr823. Positions 785–787 (YVN) are GRB2-binding. The YXXM motif 7 motif lies at 823-826 (YMNM). Positions 840–863 (TSSYEPPNKPVNSVCPTETCSSSR) are enriched in polar residues. Residues 840-868 (TSSYEPPNKPVNSVCPTETCSSSRPPIRG) form a disordered region. Tyr875 is modified (phosphotyrosine; by INSR). 2 consecutive short sequence motifs (YXXM motif) follow at residues 875 to 878 (YMSM) and 909 to 912 (YAEM). A disordered region spans residues 935-1006 (ASRSSLLGQG…SGEDVKRHSS (72 aa)). Composition is skewed to polar residues over residues 946 to 961 (GPSA…NRNP) and 980 to 995 (ETFS…TTGP). Phosphotyrosine; by INSR is present on residues Tyr1037 and Tyr1069.

Interacts with the NPXY motif of tyrosine-phosphorylated igf1r and insr via the PTB domain. Binds to phosphatidylinositol 3-kinase p85 subunit at a low level in vitro prior to phosphorylation. Binding is greatly enhanced following tyrosine phosphorylation by insr and probably occurs via the phosphorylated YXXM motifs. In terms of processing, phosphorylation of Tyr-785 is required for grb2-binding.

In terms of biological role, may mediate the control of various cellular processes by insulin. When phosphorylated by the insulin receptor binds specifically to various cellular proteins containing SH2 domains such as phosphatidylinositol 3-kinase p85 subunit or grb2. Activates phosphatidylinositol 3-kinase when bound to the regulatory p85 subunit. This Xenopus laevis (African clawed frog) protein is Insulin receptor substrate 1-B (irs1-b).